The chain runs to 298 residues: HTH-type transcriptional regulator TsaR (298 aa).

The HTH lysR-type domain occupies 1–58 (MKLQTLQALICIEEVGSLRAAAQLLHLSQPALSAAIQQLEDELKAPLLVRTKRGVSLT). A DNA-binding region (H-T-H motif) is located at residues 18–37 (LRAAAQLLHLSQPALSAAIQ). Residues Ser-98 and Ala-100 each coordinate toluene-4-sulfonate.

Belongs to the LysR transcriptional regulatory family. As to quaternary structure, homotetramer. Dimer of dimers related by a twofold axis.

Its activity is regulated as follows. Sensitive to oxygen. Functionally, regulates expression of the tsaMBCD1 operon and of tsaT in response to p-toluenesulfonate (TSA). Acts by binding directly to the promoter region. Binding to the tsa promoter depends on TSA concentration. The sequence is that of HTH-type transcriptional regulator TsaR (tsaR) from Comamonas testosteroni (Pseudomonas testosteroni).